The chain runs to 71 residues: HWHLVYPIEAPDRSIVDKDRRGELFYYMHQQIIARYNAERYNAERLSNHMARVQPFNNLDEPIAEGYFPKM.

Cu cation is bound by residues H3 and H29.

It belongs to the tyrosinase family. Cu(2+) is required as a cofactor. Upon activation, a trypsin type protease cleaves prophenol oxidase to yield the active enzyme. In terms of tissue distribution, hemocytes and plasma.

The protein localises to the secreted. It catalyses the reaction 2 L-dopa + O2 = 2 L-dopaquinone + 2 H2O. It carries out the reaction L-tyrosine + O2 = L-dopaquinone + H2O. This is a copper-containing oxidase that functions in the formation of pigments such as melanins and other polyphenolic compounds. Catalyzes the rate-limiting conversions of tyrosine to DOPA, DOPA to DOPA-quinone and possibly 5,6 dihydroxyindole to indole-5'6 quinone. The sequence is that of Phenoloxidase 3 from Sarcophaga argyrostoma (Flesh fly).